A 245-amino-acid polypeptide reads, in one-letter code: Pyridoxine 5'-phosphate synthase (245 aa).

Asn-9 is a 3-amino-2-oxopropyl phosphate binding site. 11-12 (DH) lines the 1-deoxy-D-xylulose 5-phosphate pocket. Residue Arg-20 participates in 3-amino-2-oxopropyl phosphate binding. The active-site Proton acceptor is the His-45. The 1-deoxy-D-xylulose 5-phosphate site is built by Arg-47 and His-52. Glu-72 acts as the Proton acceptor in catalysis. Thr-102 is a 1-deoxy-D-xylulose 5-phosphate binding site. His-193 acts as the Proton donor in catalysis. 3-amino-2-oxopropyl phosphate contacts are provided by residues Gly-194 and 215–216 (GH).

The protein belongs to the PNP synthase family. In terms of assembly, homooctamer; tetramer of dimers.

The protein localises to the cytoplasm. It carries out the reaction 3-amino-2-oxopropyl phosphate + 1-deoxy-D-xylulose 5-phosphate = pyridoxine 5'-phosphate + phosphate + 2 H2O + H(+). It participates in cofactor biosynthesis; pyridoxine 5'-phosphate biosynthesis; pyridoxine 5'-phosphate from D-erythrose 4-phosphate: step 5/5. In terms of biological role, catalyzes the complicated ring closure reaction between the two acyclic compounds 1-deoxy-D-xylulose-5-phosphate (DXP) and 3-amino-2-oxopropyl phosphate (1-amino-acetone-3-phosphate or AAP) to form pyridoxine 5'-phosphate (PNP) and inorganic phosphate. The chain is Pyridoxine 5'-phosphate synthase from Shewanella oneidensis (strain ATCC 700550 / JCM 31522 / CIP 106686 / LMG 19005 / NCIMB 14063 / MR-1).